The chain runs to 251 residues: Octanoyltransferase (251 aa).

The region spanning 49–230 (DEIPDQLLIL…ALDDALAGRL (182 aa)) is the BPL/LPL catalytic domain. Substrate contacts are provided by residues 87-94 (RGGRITWH), 160-162 (AIG), and 173-175 (GVA). The Acyl-thioester intermediate role is filled by Cys-191.

It belongs to the LipB family.

The protein resides in the cytoplasm. It carries out the reaction octanoyl-[ACP] + L-lysyl-[protein] = N(6)-octanoyl-L-lysyl-[protein] + holo-[ACP] + H(+). It participates in protein modification; protein lipoylation via endogenous pathway; protein N(6)-(lipoyl)lysine from octanoyl-[acyl-carrier-protein]: step 1/2. In terms of biological role, catalyzes the transfer of endogenously produced octanoic acid from octanoyl-acyl-carrier-protein onto the lipoyl domains of lipoate-dependent enzymes. Lipoyl-ACP can also act as a substrate although octanoyl-ACP is likely to be the physiological substrate. The sequence is that of Octanoyltransferase from Corynebacterium glutamicum (strain R).